The primary structure comprises 662 residues: DNA ligase (662 aa).

NAD(+) is bound by residues 34–38, 83–84, and Glu113; these read DYDYD and SI. The active-site N6-AMP-lysine intermediate is the Lys115. Residues Arg136, Glu172, Lys286, and Lys310 each coordinate NAD(+). 4 residues coordinate Zn(2+): Cys404, Cys407, Cys422, and Cys427. One can recognise a BRCT domain in the interval 583–662; the sequence is RASASCQGKT…SDLLKILYPN (80 aa).

This sequence belongs to the NAD-dependent DNA ligase family. LigA subfamily. It depends on Mg(2+) as a cofactor. Mn(2+) is required as a cofactor.

The catalysed reaction is NAD(+) + (deoxyribonucleotide)n-3'-hydroxyl + 5'-phospho-(deoxyribonucleotide)m = (deoxyribonucleotide)n+m + AMP + beta-nicotinamide D-nucleotide.. In terms of biological role, DNA ligase that catalyzes the formation of phosphodiester linkages between 5'-phosphoryl and 3'-hydroxyl groups in double-stranded DNA using NAD as a coenzyme and as the energy source for the reaction. It is essential for DNA replication and repair of damaged DNA. The protein is DNA ligase of Chlamydia felis (strain Fe/C-56) (Chlamydophila felis).